A 430-amino-acid polypeptide reads, in one-letter code: Aspartate aminotransferase, mitochondrial (430 aa).

Residues 1–29 constitute a mitochondrion transit peptide; that stretch reads MALLHSSRILSGMAAAFHPGLAAAASARA. Thr-48 carries the post-translational modification Phosphothreonine. Position 59 is an N6-acetyllysine (Lys-59). Position 65 (Gly-65) interacts with substrate. The residue at position 73 (Lys-73) is an N6-acetyllysine; alternate. The residue at position 73 (Lys-73) is an N6-succinyllysine; alternate. Lys-82 bears the N6-acetyllysine mark. Lys-90 bears the N6-acetyllysine; alternate mark. An N6-succinyllysine; alternate modification is found at Lys-90. The residue at position 96 (Tyr-96) is a 3'-nitrotyrosine; alternate. A Phosphotyrosine; alternate modification is found at Tyr-96. Residues Lys-107 and Lys-122 each carry the N6-acetyllysine; alternate modification. Lys-107 and Lys-122 each carry N6-succinyllysine; alternate. Residue Ser-143 is modified to Phosphoserine. Lys-159 carries the post-translational modification N6-acetyllysine; alternate. At Lys-159 the chain carries N6-succinyllysine; alternate. Residue Trp-162 coordinates substrate. Lys-185 carries the N6-acetyllysine; alternate modification. Residue Lys-185 is modified to N6-succinyllysine; alternate. Asn-215 contacts substrate. Lys-227 carries the N6-succinyllysine modification. N6-acetyllysine is present on Lys-234. An N6-acetyllysine; alternate mark is found at Lys-279 and Lys-296. At Lys-279 the chain carries N6-(pyridoxal phosphate)lysine; alternate. N6-succinyllysine; alternate is present on Lys-296. Lys-302 is subject to N6-acetyllysine. An N6-acetyllysine; alternate modification is found at Lys-309. Lys-309 is subject to N6-succinyllysine; alternate. Position 313 is an asymmetric dimethylarginine (Arg-313). The residue at position 338 (Lys-338) is an N6-acetyllysine; alternate. Position 338 is an N6-succinyllysine; alternate (Lys-338). N6-acetyllysine is present on Lys-345. Lys-363 is modified (N6-acetyllysine; alternate). Lys-363 bears the N6-succinyllysine; alternate mark. An N6-acetyllysine mark is found at Lys-364 and Lys-387. N6-acetyllysine; alternate occurs at positions 396 and 404. Residues Lys-396 and Lys-404 each carry the N6-succinyllysine; alternate modification. Substrate is bound at residue Arg-407.

It belongs to the class-I pyridoxal-phosphate-dependent aminotransferase family. Homodimer. It depends on pyridoxal 5'-phosphate as a cofactor. Acetylation of Lys-296, Lys-345 and Lys-363 is observed in liver mitochondria from fasted mice but not from fed mice. As to expression, detected in brain (at protein level).

It is found in the mitochondrion matrix. The protein resides in the cell membrane. It carries out the reaction L-aspartate + 2-oxoglutarate = oxaloacetate + L-glutamate. It catalyses the reaction L-kynurenine + 2-oxoglutarate = kynurenate + L-glutamate + H2O. Catalyzes the irreversible transamination of the L-tryptophan metabolite L-kynurenine to form kynurenic acid (KA). As a member of the malate-aspartate shuttle, it has a key role in the intracellular NAD(H) redox balance. Is important for metabolite exchange between mitochondria and cytosol, and for amino acid metabolism. Facilitates cellular uptake of long-chain free fatty acids. The polypeptide is Aspartate aminotransferase, mitochondrial (Got2) (Mus musculus (Mouse)).